An 876-amino-acid chain; its full sequence is Exonuclease mut-7 homolog (876 aa).

The 3'-5' exonuclease domain maps to 517–571; it reads GLSLLVQQVLGTALDKTQQLSNWDRRPLCEEQVIYAAADAYCLLEVHQALCREPA. 2 disordered regions span residues 578–607 and 751–781; these read DLAG…APAA and SHQE…AAPE.

This sequence belongs to the mut-7 family. Mg(2+) is required as a cofactor.

In terms of biological role, possesses 3'-5' exoribonuclease activity. Required for 3'-end trimming of AGO1-bound miRNAs. This is Exonuclease mut-7 homolog (EXD3) from Homo sapiens (Human).